Consider the following 220-residue polypeptide: Uracil-DNA glycosylase (220 aa).

Catalysis depends on aspartate 65, which acts as the Proton acceptor.

It belongs to the uracil-DNA glycosylase (UDG) superfamily. UNG family.

The protein resides in the cytoplasm. The catalysed reaction is Hydrolyzes single-stranded DNA or mismatched double-stranded DNA and polynucleotides, releasing free uracil.. In terms of biological role, excises uracil residues from the DNA which can arise as a result of misincorporation of dUMP residues by DNA polymerase or due to deamination of cytosine. The polypeptide is Uracil-DNA glycosylase (Phocaeicola vulgatus (strain ATCC 8482 / DSM 1447 / JCM 5826 / CCUG 4940 / NBRC 14291 / NCTC 11154) (Bacteroides vulgatus)).